A 197-amino-acid chain; its full sequence is GTP cyclohydrolase-2 (197 aa).

50 to 54 (RIHSE) serves as a coordination point for GTP. 3 residues coordinate Zn(2+): C55, C66, and C68. Residues Q71, 93-95 (EGR), and T115 contribute to the GTP site. D127 functions as the Proton acceptor in the catalytic mechanism. R129 (nucleophile) is an active-site residue. 2 residues coordinate GTP: T150 and K155.

Belongs to the GTP cyclohydrolase II family. Zn(2+) is required as a cofactor.

It carries out the reaction GTP + 4 H2O = 2,5-diamino-6-hydroxy-4-(5-phosphoribosylamino)-pyrimidine + formate + 2 phosphate + 3 H(+). The protein operates within cofactor biosynthesis; riboflavin biosynthesis; 5-amino-6-(D-ribitylamino)uracil from GTP: step 1/4. Functionally, catalyzes the conversion of GTP to 2,5-diamino-6-ribosylamino-4(3H)-pyrimidinone 5'-phosphate (DARP), formate and pyrophosphate. In Neisseria meningitidis serogroup A / serotype 4A (strain DSM 15465 / Z2491), this protein is GTP cyclohydrolase-2.